We begin with the raw amino-acid sequence, 357 residues long: Ribosomal RNA large subunit methyltransferase F (357 aa).

Over residues 1 to 15 the composition is skewed to polar residues; sequence MPKPPRSTQILSCNA. The tract at residues 1 to 33 is disordered; the sequence is MPKPPRSTQILSCNAPNGKPKTQHPSARAKVKR.

Belongs to the methyltransferase superfamily. METTL16/RlmF family.

It is found in the cytoplasm. It carries out the reaction adenosine(1618) in 23S rRNA + S-adenosyl-L-methionine = N(6)-methyladenosine(1618) in 23S rRNA + S-adenosyl-L-homocysteine + H(+). In terms of biological role, specifically methylates the adenine in position 1618 of 23S rRNA. The sequence is that of Ribosomal RNA large subunit methyltransferase F from Shewanella putrefaciens (strain CN-32 / ATCC BAA-453).